Consider the following 215-residue polypeptide: Disulfide-bond oxidoreductase YfcG (215 aa).

The GST N-terminal domain occupies methionine 1–leucine 87. Residues asparagine 11, glutamine 38, arginine 40, isoleucine 52, glutamate 71–serine 72, and arginine 132 contribute to the glutathione site. A GST C-terminal domain is found at glutamate 90–serine 215.

This sequence belongs to the GST superfamily. Nu-class GSH transferase family. As to quaternary structure, homodimer.

Functionally, exhibits a very robust glutathione (GSH)-dependent disulfide-bond reductase activity toward the model substrate, 2-hydroxyethyl disulfide; the actual physiological substrates are not known. Also has a low GSH-dependent hydroperoxidase activity toward cumene hydroperoxide, but does not reduce H(2)O(2), tert-butyl hydroperoxide, benzyl peroxide, or lauroyl peroxide. Exhibits little or no GSH transferase activity with most typical electrophilic substrates, and has no detectable transferase activity using glutathionylspermidine (GspSH) as the nucleophilic substrate. Is involved in defense against oxidative stress, probably via its peroxidase activity. The polypeptide is Disulfide-bond oxidoreductase YfcG (yfcG) (Escherichia coli (strain K12)).